The following is a 90-amino-acid chain: WAP four-disulfide core domain protein 12 (90 aa).

The signal sequence occupies residues 1 to 23; sequence MGSSSFLVLMVSLALVTLVAVEG. Positions 27–74 constitute a WAP domain; it reads GIEKAGVCPADNVRCFKSDPPQCHTDQDCLGERKCCYLHCGFKCVIPV. Intrachain disulfides connect Cys-34/Cys-62, Cys-41/Cys-66, Cys-49/Cys-61, and Cys-55/Cys-70.

It is found in the secreted. Antibacterial protein. Putative acid-stable proteinase inhibitor. This is WAP four-disulfide core domain protein 12 (WFDC12) from Pongo abelii (Sumatran orangutan).